The following is a 39-amino-acid chain: Photosystem II reaction center protein L (39 aa).

The helical transmembrane segment at 18–38 (SLYWGLLLIFVLAVLFSNYFF) threads the bilayer.

Belongs to the PsbL family. As to quaternary structure, PSII is composed of 1 copy each of membrane proteins PsbA, PsbB, PsbC, PsbD, PsbE, PsbF, PsbH, PsbI, PsbJ, PsbK, PsbL, PsbM, PsbT, PsbX, PsbY, PsbZ, Psb30/Ycf12, at least 3 peripheral proteins of the oxygen-evolving complex and a large number of cofactors. It forms dimeric complexes.

It is found in the plastid thylakoid membrane. In terms of biological role, one of the components of the core complex of photosystem II (PSII). PSII is a light-driven water:plastoquinone oxidoreductase that uses light energy to abstract electrons from H(2)O, generating O(2) and a proton gradient subsequently used for ATP formation. It consists of a core antenna complex that captures photons, and an electron transfer chain that converts photonic excitation into a charge separation. This subunit is found at the monomer-monomer interface and is required for correct PSII assembly and/or dimerization. In Cuscuta gronovii (Common dodder), this protein is Photosystem II reaction center protein L.